A 403-amino-acid polypeptide reads, in one-letter code: TPR repeat-containing protein Synpcc7942_0270 (403 aa).

5 TPR repeats span residues 208-243 (AYLC…PEPA), 244-282 (VRYE…AIHK), 283-316 (LGAW…APQA), 317-350 (TVAL…DPND), and 351-387 (PSLY…QGSP).

The polypeptide is TPR repeat-containing protein Synpcc7942_0270 (Synechococcus elongatus (strain ATCC 33912 / PCC 7942 / FACHB-805) (Anacystis nidulans R2)).